A 92-amino-acid chain; its full sequence is Endoribonuclease VapD homolog (92 aa).

This sequence belongs to the VapD ribonuclease family. As to quaternary structure, homodimer.

Cleaves ssRNA, mostly between U:A. The chain is Endoribonuclease VapD homolog from Neisseria gonorrhoeae.